The primary structure comprises 432 residues: MNTHESEVYTVAPEMPAMFDGMKLAAVATVLYVIVRCLNLKSPTAPPDLTFQDTTLNHFLLKSCPILTKEYIPPLLWGKSGHLQTALYGKLGRVSSPHPFGLRKYLPMQDGATATFDLFEPLADHQSGEDVTMVICPGIGNHSEKHYIRTFVDHSQKQGYRCAVLNHLGALPNIELTSPRMFTYGCTWEFAAMVGFIKKTYPQSKLIVVGFSLGGNIVCKFLGENRTNQERVLCCVSVCQGYSALRAQETFLQWDQCRRFYNFLMADNMKKIILSHRGVLFGVGSKMVDSELSRLYTATSLMQIDDNIMRKFHGHNSLKEYYEKESCVHYIHNINVPLLLVNSVDDPLVHNSLLTIPRTLAEKKENVVFALTLHGGHLGFFEGAVLFPQPLTWMDKVIVDYATAMCQWEKQKPPCQSKDAQSNQTTCQENTS.

Over 1–14 (MNTHESEVYTVAPE) the chain is Cytoplasmic. Residues 15 to 35 (MPAMFDGMKLAAVATVLYVIV) form a helical; Signal-anchor for type II membrane protein membrane-spanning segment. Topologically, residues 36-432 (RCLNLKSPTA…NQTTCQENTS (397 aa)) are extracellular. Residues 132–383 (TMVICPGIGN…HGGHLGFFEG (252 aa)) enclose the AB hydrolase-1 domain. N-linked (GlcNAc...) asparagine glycosylation is present at Asn141. The active-site Nucleophile is the Ser212. Residue Asn225 is glycosylated (N-linked (GlcNAc...) asparagine). Catalysis depends on charge relay system residues Asp346 and His377. A disordered region spans residues 413–432 (PPCQSKDAQSNQTTCQENTS). The span at 418 to 432 (KDAQSNQTTCQENTS) shows a compositional bias: polar residues. Asn423 carries N-linked (GlcNAc...) asparagine glycosylation.

The protein belongs to the AB hydrolase superfamily. AB hydrolase 4 family.

The protein localises to the cell membrane. The catalysed reaction is Hydrolyzes glycerol monoesters of long-chain fatty acids.. The enzyme catalyses an acetyl ester + H2O = an aliphatic alcohol + acetate + H(+). It catalyses the reaction a triacylglycerol + H2O = a diacylglycerol + a fatty acid + H(+). It carries out the reaction 2-(5Z,8Z,11Z,14Z-eicosatetraenoyl)-glycerol + H2O = glycerol + (5Z,8Z,11Z,14Z)-eicosatetraenoate + H(+). The catalysed reaction is a butanoate ester + H2O = an aliphatic alcohol + butanoate + H(+). The enzyme catalyses hexadecanoate ester + H2O = an aliphatic alcohol + hexadecanoate + H(+). Its activity is regulated as follows. Acylglycerol lipase activity is activated upon binding to progesterone. In terms of biological role, progesterone-dependent acylglycerol lipase that catalyzes hydrolysis of endocannabinoid arachidonoylglycerol (AG) from cell membrane. Acts as a progesterone receptor: progesterone-binding activates the acylglycerol lipase activity, mediating degradation of 1-arachidonoylglycerol (1AG) and 2-arachidonoylglycerol (2AG) to glycerol and arachidonic acid (AA). Also displays an ester hydrolase activity against acetyl ester, butanoate ester and hexadecanoate ester. Plays a key role in sperm capacitation in response to progesterone by mediating degradation of 2AG, an inhibitor of the sperm calcium channel CatSper, leading to calcium influx via CatSper and sperm activation. May also play a role in smooth muscle cells migration. In Danio rerio (Zebrafish), this protein is Monoacylglycerol lipase ABHD2 (abhd2a).